We begin with the raw amino-acid sequence, 313 residues long: Olfactory receptor 10K1 (313 aa).

At 1 to 25 (MEQVNKTVVREFVVLGFSSLARLQQ) the chain is on the extracellular side. Asn5 carries an N-linked (GlcNAc...) asparagine glycan. A helical transmembrane segment spans residues 26–46 (LLFVIFLLLYLFTLGTNAIII). Over 47–54 (STIVLDRA) the chain is Cytoplasmic. Residues 55 to 75 (LHTPMYFFLAILSCSEICYTF) form a helical membrane-spanning segment. Residues 76 to 99 (VIVPKMLVDLLSQKKTISFLGCAI) are Extracellular-facing. A helical membrane pass occupies residues 100 to 120 (QMFSFLFFGSSHSFLLAAMGY). The Cytoplasmic portion of the chain corresponds to 121-139 (DRYMAICNPLRYSVLMGHG). The helical transmembrane segment at 140–160 (VCMGLMAAACACGFTVSLVTT) threads the bilayer. The Extracellular segment spans residues 161-197 (SLVFHLPFHSSNQLHHFFCDISPVLKLASQHSGFSQL). Residues 198-217 (VIFMLGVFALVIPLLLILVS) form a helical membrane-spanning segment. At 218–237 (YIRIISAILKIPSSVGRYKT) the chain is on the cytoplasmic side. Residues 238–258 (FSTCASHLIVVTVHYSCASFI) form a helical membrane-spanning segment. Residues 259 to 271 (YLRPKTNYTSSQD) lie on the Extracellular side of the membrane. Residue Asn265 is glycosylated (N-linked (GlcNAc...) asparagine). The chain crosses the membrane as a helical span at residues 272–292 (TLISVSYTILTPLFNPMIYSL). Residues 293 to 313 (RNKEFKSALRRTIGQTFYPLS) lie on the Cytoplasmic side of the membrane.

The protein belongs to the G-protein coupled receptor 1 family.

The protein resides in the cell membrane. Its function is as follows. Odorant receptor. This Homo sapiens (Human) protein is Olfactory receptor 10K1 (OR10K1).